We begin with the raw amino-acid sequence, 590 residues long: Aspartate--tRNA(Asp/Asn) ligase (590 aa).

E172 contacts L-aspartate. Residues 196–199 (QLFK) are aspartate. R218 is a binding site for L-aspartate. Residues 218-220 (RDE) and Q227 each bind ATP. An L-aspartate-binding site is contributed by H449. E484 contacts ATP. R491 serves as a coordination point for L-aspartate. ATP is bound at residue 536–539 (GVDR).

Belongs to the class-II aminoacyl-tRNA synthetase family. Type 1 subfamily. Homodimer.

Its subcellular location is the cytoplasm. It carries out the reaction tRNA(Asx) + L-aspartate + ATP = L-aspartyl-tRNA(Asx) + AMP + diphosphate. Aspartyl-tRNA synthetase with relaxed tRNA specificity since it is able to aspartylate not only its cognate tRNA(Asp) but also tRNA(Asn). Reaction proceeds in two steps: L-aspartate is first activated by ATP to form Asp-AMP and then transferred to the acceptor end of tRNA(Asp/Asn). The chain is Aspartate--tRNA(Asp/Asn) ligase from Francisella tularensis subsp. tularensis (strain WY96-3418).